Here is a 561-residue protein sequence, read N- to C-terminus: Arginine--tRNA ligase (561 aa).

The short motif at 129-139 (ANPTGPLHIGH) is the 'HIGH' region element.

The protein belongs to the class-I aminoacyl-tRNA synthetase family. As to quaternary structure, monomer.

The protein localises to the cytoplasm. The enzyme catalyses tRNA(Arg) + L-arginine + ATP = L-arginyl-tRNA(Arg) + AMP + diphosphate. This is Arginine--tRNA ligase from Geotalea daltonii (strain DSM 22248 / JCM 15807 / FRC-32) (Geobacter daltonii).